The chain runs to 525 residues: uncharacterized protein (525 aa).

Position 55 is a phosphoserine (Ser-55). The next 13 helical transmembrane spans lie at 81–101, 120–140, 147–167, 173–193, 208–228, 238–258, 295–315, 318–338, 350–370, 388–408, 413–433, 454–474, and 484–504; these read AYIV…PNFY, LLGQ…LGPL, KLVY…CALA, LVIS…NVAG, MYMF…GTGV, WLYW…VFTP, FVFF…SLGI, GFVN…YFSI, YMAA…QCWL, FIMT…FAFC, IHYI…YHIW, AFEL…ALMF, and AVVG…YFYG.

Belongs to the major facilitator superfamily. CAR1 family.

It localises to the membrane. This is an uncharacterized protein from Schizosaccharomyces pombe (strain 972 / ATCC 24843) (Fission yeast).